The sequence spans 148 residues: Ribosome maturation factor RimP (148 aa).

This sequence belongs to the RimP family.

It localises to the cytoplasm. Required for maturation of 30S ribosomal subunits. The chain is Ribosome maturation factor RimP from Thermosipho africanus (strain TCF52B).